Reading from the N-terminus, the 743-residue chain is 1,4-alpha-glucan branching enzyme GlgB (743 aa).

Asp-416 acts as the Nucleophile in catalysis. The active-site Proton donor is the Glu-469.

Belongs to the glycosyl hydrolase 13 family. GlgB subfamily. As to quaternary structure, monomer.

It catalyses the reaction Transfers a segment of a (1-&gt;4)-alpha-D-glucan chain to a primary hydroxy group in a similar glucan chain.. Its pathway is glycan biosynthesis; glycogen biosynthesis. Its function is as follows. Catalyzes the formation of the alpha-1,6-glucosidic linkages in glycogen by scission of a 1,4-alpha-linked oligosaccharide from growing alpha-1,4-glucan chains and the subsequent attachment of the oligosaccharide to the alpha-1,6 position. The chain is 1,4-alpha-glucan branching enzyme GlgB from Shewanella baltica (strain OS185).